The primary structure comprises 902 residues: Calcium-activated chloride channel regulator 3A-1 (902 aa).

Positions 1-21 are cleaved as a signal peptide; that stretch reads MVPGLQVLLFLTLHLLQNTES. Residues 45–199 form a metalloprotease domain region; sequence DERLIPSIKE…RITGTNVVHN (155 aa). Asparagine 75 carries an N-linked (GlcNAc...) asparagine glycan. Histidine 155 is a Zn(2+) binding site. The active site involves glutamate 156. The Zn(2+) site is built by histidine 159 and aspartate 166. The 169-residue stretch at 308–476 folds into the VWFA domain; sequence VVCLVLDKSG…NSLIDAFSRI (169 aa). N-linked (GlcNAc...) asparagine glycosylation is found at asparagine 504, asparagine 515, asparagine 630, asparagine 687, asparagine 697, asparagine 809, and asparagine 814.

This sequence belongs to the CLCR family. As to quaternary structure, part of a complex composed of complement component C3, CLCA1/CLCA3, A2ML1/OH and ALB/serum albumin. In terms of processing, glycosylated. Post-translationally, the 130-kDa product is autoproteolytically processed by the metalloprotease domain and yields two subunits, a 90-kDa protein and a group of 32- to 38-kDa proteins. The cleavage is necessary for calcium-activated chloride channel (CaCC) activation activity. In terms of tissue distribution, highly expressed in skin and spleen, and at lower levels in kidney and liver. Also detected in lung and brain. Not detected in lung or brain. In lung, localizes to respiratory epithelia of the bronchi and trachea and the submucosal glands.

Its subcellular location is the cell membrane. Its function is as follows. Plays a role in modulating chloride current across the plasma membrane in a calcium-dependent manner. The polypeptide is Calcium-activated chloride channel regulator 3A-1 (Mus musculus (Mouse)).